Consider the following 318-residue polypeptide: Strigolactone esterase D14 (318 aa).

A compositionally biased stretch (pro residues) spans 1–11; that stretch reads MLRSTHPPPSS. The segment at 1–48 is disordered; sequence MLRSTHPPPSSPSSSSSGGGGGGGSSASSSSEKTMVGGGGGGGGGSGS. Over residues 36–47 the composition is skewed to gly residues; that stretch reads VGGGGGGGGGSG. Catalysis depends on serine 147, which acts as the Nucleophile. Substrate is bound by residues serine 147 and cysteine 241. Active-site residues include aspartate 268 and histidine 297. Histidine 297 serves as a coordination point for substrate.

Belongs to the AB hydrolase superfamily. In terms of assembly, interacts with D53. The interaction between D53 and D14 is enhanced in the presence of strigolactones. The interaction with D53 occurs in the presence of (2'R) stereoisomers of strigolactones, but not (2'S) stereoisomers. Interacts with SLR1 in a strigolactone-dependent manner. Interacts with D3 in a strigolactone-dependent manner. In terms of tissue distribution, expressed in the parenchyma cells of the root stele and lateral roots, vascular tissues of vein and leaf sheath, ligule base, auricle base and stem base.

It localises to the cytoplasm. The protein resides in the nucleus. In terms of biological role, involved in strigolactone (SL) signaling pathway. May function downstream of SL synthesis, as a component of hormone signaling or as an enzyme that participates in the conversion of SL to the bioactive form. Strigolactones are hormones that inhibit tillering and shoot branching through the MAX-dependent pathway, contribute to the regulation of shoot architectural response to phosphate-limiting conditions and function as rhizosphere signal that stimulates hyphal branching of arbuscular mycorrhizal fungi and trigger seed germination of root parasitic weeds. Strigolactone-dependent association of D14 with D3 and D53 (a repressor of SL signaling) triggers D53 ubiquitination and degradation. Hydrolyzes the butenolide ring of SLs. A reaction product D-OH is trapped in the cavity of D14, inducing the interaction with SLR1, and probably with other proteins such as D3 and D53. Contributes to the negative regulation of gibberellin signaling. This is Strigolactone esterase D14 from Oryza sativa subsp. japonica (Rice).